The chain runs to 209 residues: Large ribosomal subunit protein uL3 (209 aa).

A disordered region spans residues R130–R154.

This sequence belongs to the universal ribosomal protein uL3 family. Part of the 50S ribosomal subunit. Forms a cluster with proteins L14 and L19.

In terms of biological role, one of the primary rRNA binding proteins, it binds directly near the 3'-end of the 23S rRNA, where it nucleates assembly of the 50S subunit. The chain is Large ribosomal subunit protein uL3 from Clostridium kluyveri (strain NBRC 12016).